A 136-amino-acid polypeptide reads, in one-letter code: Replication enhancer (136 aa).

Belongs to the geminiviridae replication enhancer protein family. As to quaternary structure, homooligomer. Interacts with the replication-associated protein (REP). Interacts with host proliferating cell nuclear antigen (PCNA). Interacts with host retinoblastoma-related protein 1 (RBR1), and may thereby deregulate the host cell cycle. Oligomerization and interaction with PCNA are necessary for optimal replication enhancement.

Its function is as follows. Increases viral DNA accumulation. Enhances infectivity and symptom expression. This Beet curly top virus (strain California/Logan) (BCTV) protein is Replication enhancer.